The sequence spans 801 residues: Mitochondrial intermediate peptidase (801 aa).

Residues 1 to 41 constitute a mitochondrion transit peptide; sequence MKPQLLTPLRRRPWTCRQCLQRLQRLQQQTRRSFETAASPA. The disordered stretch occupies residues 31–54; sequence RRSFETAASPAPGHTQVDYIPADA. His565 is a Zn(2+) binding site. The active site involves Glu566. Zn(2+)-binding residues include His569 and His572.

The protein belongs to the peptidase M3 family. Zn(2+) is required as a cofactor.

The protein localises to the mitochondrion matrix. It carries out the reaction Release of an N-terminal octapeptide as second stage of processing of some proteins imported into the mitochondrion.. Its function is as follows. Cleaves proteins, imported into the mitochondrion, to their mature size. While most mitochondrial precursor proteins are processed to the mature form in one step by mitochondrial processing peptidase (MPP), the sequential cleavage by MIP of an octapeptide after initial processing by MPP is a required step for a subgroup of nuclear-encoded precursor proteins destined for the matrix or the inner membrane. This Aspergillus clavatus (strain ATCC 1007 / CBS 513.65 / DSM 816 / NCTC 3887 / NRRL 1 / QM 1276 / 107) protein is Mitochondrial intermediate peptidase (oct1).